The chain runs to 768 residues: Vacuolar basic amino acid transporter 4 (768 aa).

The Cytoplasmic segment spans residues 1–252; it reads MGKKDRQRKK…HDLTRRRIFS (252 aa). Positions 9–40 form a coiled coil; sequence KKLREFAKLKNRQRNLRKSVQTLKNEVQREAK. The segment at 34–172 is disordered; sequence EVQREAKVPR…ELPVSSSNSF (139 aa). Residues serine 62, serine 99, and serine 106 each carry the phosphoserine modification. Basic and acidic residues predominate over residues 110–121; the sequence is KPADKANEDDLK. The segment covering 132-159 has biased composition (polar residues); that stretch reads SALQSSITDFSDRSVSPLQSITSCNTPM. 2 positions are modified to phosphoserine: serine 160 and serine 192. Residues 253–273 form a helical membrane-spanning segment; the sequence is SCMCTYLFFIAMDSSIILVIA. At 274–282 the chain is on the vacuolar side; the sequence is SKIASEFHE. Residues 283 to 305 form a helical membrane-spanning segment; it reads LWRLSLVISAYLLSNAIGQLVFL. Residues 306–311 lie on the Cytoplasmic side of the membrane; that stretch reads KLSLIS. The chain crosses the membrane as a helical span at residues 312–331; it reads SVKLLLCIAQFSFILGGYLS. Residues 332–334 lie on the Vacuolar side of the membrane; that stretch reads WSS. The helical transmembrane segment at 335-357 threads the bilayer; that stretch reads AHFWTFIFARCVTGFGGGSLIAL. Residues 358–375 are Cytoplasmic-facing; sequence KSTIMNRFSQKNDSRYSL. Residues 376–396 traverse the membrane as a helical segment; sequence SASMITFAMGVVIGPFMMNLF. Residues 397-406 lie on the Vacuolar side of the membrane; the sequence is DSSHGSGWRN. The helical transmembrane segment at 407-427 threads the bilayer; it reads AFLIPVPFCLVNASIMLADMY. Residues 428-447 lie on the Cytoplasmic side of the membrane; the sequence is SVKSTLYGRPTPTLWKRFKN. The helical transmembrane segment at 448-468 threads the bilayer; sequence TLLSPDLYEILTLTLFLLCFV. Residues 469–481 are Vacuolar-facing; the sequence is QVTSLDLTGLKNN. A glycan (N-linked (GlcNAc...) asparagine) is linked at asparagine 480. A helical membrane pass occupies residues 482-502; that stretch reads TMIQALLFSVIIVCGILFFLI. Residues 503–522 are Cytoplasmic-facing; sequence ETSDTYMNSVISMSLQGDKR. A helical membrane pass occupies residues 523 to 543; it reads LIWTMIGISFCFAALMCIIPF. Topologically, residues 544-562 are vacuolar; that stretch reads GTTYFIIVLNLSTLQLAER. Asparagine 553 carries an N-linked (GlcNAc...) asparagine glycan. Residues 563 to 583 traverse the membrane as a helical segment; that stretch reads LSPFFFSIVLGYFSVSYFWKS. Residues 584–587 are Cytoplasmic-facing; sequence KGQN. A helical membrane pass occupies residues 588-608; the sequence is FLLKFVLSGATLLLYVALMGV. At 609–617 the chain is on the vacuolar side; the sequence is SLNLPVWKQ. The helical transmembrane segment at 618-638 threads the bilayer; the sequence is YICLSLPFLGSSMILTLLSNL. At 639-653 the chain is on the cytoplasmic side; sequence YHEYHEQRKSPISGS. Residues 654–674 form a helical membrane-spanning segment; it reads IVYCFGAVGGTVGISLGGYVF. Topologically, residues 675–734 are vacuolar; it reads HKTLIKLMHEKVMPFSKQGYLKKDLLKIIKHATESSDWVHESAPKFVFQTLIECYLQACR. A helical transmembrane segment spans residues 735-755; sequence NVFKLSTLFFTITVVAIFIFN. Topologically, residues 756–768 are cytoplasmic; the sequence is RIHCRSQNCLSLS.

Belongs to the major facilitator superfamily.

The protein resides in the vacuole membrane. Its function is as follows. Transporter required for vacuolar uptake of basic amino acids. The chain is Vacuolar basic amino acid transporter 4 (VBA4) from Saccharomyces cerevisiae (strain ATCC 204508 / S288c) (Baker's yeast).